The following is a 517-amino-acid chain: Putative thymidine phosphorylase (517 aa).

The protein belongs to the thymidine/pyrimidine-nucleoside phosphorylase family. Type 2 subfamily.

The enzyme catalyses thymidine + phosphate = 2-deoxy-alpha-D-ribose 1-phosphate + thymine. This Legionella pneumophila (strain Paris) protein is Putative thymidine phosphorylase.